A 250-amino-acid polypeptide reads, in one-letter code: MSSSDQNPAATPASSGPAEPSPPGRPTAVSSRVLDMGAQLAQALKPVRQMKQHACSFALYAHDLHRQVEVHHFVARLNQDVLQCAVYDSDKPSARLIGVEYIVSDTIFEGLAPDEQRLWHSHAYEVKAGLWTDVGVPEALQSSEMASLARTYGKFWCTWQADRGDALPLGAPALMVSPQAAEPGRVRGELVRGRDERYGIDSSAGGLKAARVEMDEPEWINPNADYWRLHGKGFAVDVVPAEMKRHAPFP.

The segment at 1-29 (MSSSDQNPAATPASSGPAEPSPPGRPTAV) is disordered. A compositionally biased stretch (low complexity) spans 8 to 18 (PAATPASSGPA).

The protein belongs to the OBAP family.

In Zea mays (Maize), this protein is Oil body-associated protein 2B.